The chain runs to 271 residues: Mannosyl-3-phosphoglycerate phosphatase (271 aa).

The active-site Nucleophile is the D13. Positions 13, 15, and 214 each coordinate Mg(2+).

It belongs to the HAD-like hydrolase superfamily. MPGP family. Requires Mg(2+) as cofactor.

The protein localises to the cytoplasm. It carries out the reaction 2-O-(alpha-D-mannosyl)-3-phosphoglycerate + H2O = (2R)-2-O-(alpha-D-mannosyl)-glycerate + phosphate. The sequence is that of Mannosyl-3-phosphoglycerate phosphatase from Escherichia coli O17:K52:H18 (strain UMN026 / ExPEC).